The sequence spans 605 residues: Dynein axonemal intermediate chain 2 (605 aa).

WD repeat units lie at residues 150-203 (KTIN…IWDL), 208-246 (KPEL…CWDT), 253-294 (AELS…WWDI), 301-347 (TEVV…SCNR), 355-393 (KIVC…IWSE), 399-437 (SIMW…IWDF), and 443-481 (DPTL…LLEV). The tract at residues 568–605 (IKLTPVPQQPSPEEDQVVEEGEEAAGEEGDEEVEEDLA) is disordered. Over residues 579 to 605 (PEEDQVVEEGEEAAGEEGDEEVEEDLA) the composition is skewed to acidic residues.

The protein belongs to the dynein intermediate chain family. In terms of assembly, consists of at least two heavy chains and a number of intermediate and light chains. Interacts with DNAAF2. Interacts with DNAAF6/PIH1D3. Interacts with HEATR2; probably involved in outer arm dynein assembly. Interacts with CFAP53. In terms of tissue distribution, highly expressed in trachea and testis. Expressed in respiratory ciliated cells (at protein level).

It is found in the cytoplasm. Its subcellular location is the cytoskeleton. The protein localises to the cilium axoneme. It localises to the dynein axonemal particle. In terms of biological role, part of the dynein complex of respiratory cilia. The protein is Dynein axonemal intermediate chain 2 of Homo sapiens (Human).